The primary structure comprises 299 residues: 6-phosphogluconate dehydrogenase, NAD(+)-dependent, decarboxylating (299 aa).

Residues 7 to 12, 67 to 69, and asparagine 95 contribute to the NAD(+) site; these read GLGRMG and VPA. 3 residues coordinate substrate: asparagine 95, serine 118, and glycine 120. The active-site Proton acceptor is lysine 169. 172-173 is a binding site for substrate; sequence HN. Catalysis depends on glutamate 176, which acts as the Proton donor. Positions 177 and 268 each coordinate substrate.

It belongs to the 6-phosphogluconate dehydrogenase family. Homotetramer.

It carries out the reaction 6-phospho-D-gluconate + NAD(+) = D-ribulose 5-phosphate + CO2 + NADH. Its pathway is carbohydrate degradation; pentose phosphate pathway. Catalyzes the oxidative decarboxylation of 6-phosphogluconate to ribulose 5-phosphate and CO(2), with concomitant reduction of NAD to NADH. The sequence is that of 6-phosphogluconate dehydrogenase, NAD(+)-dependent, decarboxylating from Haloferax volcanii (strain ATCC 29605 / DSM 3757 / JCM 8879 / NBRC 14742 / NCIMB 2012 / VKM B-1768 / DS2) (Halobacterium volcanii).